The primary structure comprises 368 residues: Cobalt-precorrin-5B C(1)-methyltransferase (368 aa).

This sequence belongs to the CbiD family.

The enzyme catalyses Co-precorrin-5B + S-adenosyl-L-methionine = Co-precorrin-6A + S-adenosyl-L-homocysteine. It functions in the pathway cofactor biosynthesis; adenosylcobalamin biosynthesis; cob(II)yrinate a,c-diamide from sirohydrochlorin (anaerobic route): step 6/10. Its function is as follows. Catalyzes the methylation of C-1 in cobalt-precorrin-5B to form cobalt-precorrin-6A. The sequence is that of Cobalt-precorrin-5B C(1)-methyltransferase from Brucella anthropi (strain ATCC 49188 / DSM 6882 / CCUG 24695 / JCM 21032 / LMG 3331 / NBRC 15819 / NCTC 12168 / Alc 37) (Ochrobactrum anthropi).